Reading from the N-terminus, the 338-residue chain is tRNA-specific 2-thiouridylase MnmA (338 aa).

Residues A6–S13 and M32 each bind ATP. C92 (nucleophile) is an active-site residue. An intrachain disulfide couples C92 to C186. An ATP-binding site is contributed by G116. The interaction with tRNA stretch occupies residues K134–Q136. The active-site Cysteine persulfide intermediate is C186. The interaction with tRNA stretch occupies residues R288–Y289.

Belongs to the MnmA/TRMU family.

The protein localises to the cytoplasm. It catalyses the reaction S-sulfanyl-L-cysteinyl-[protein] + uridine(34) in tRNA + AH2 + ATP = 2-thiouridine(34) in tRNA + L-cysteinyl-[protein] + A + AMP + diphosphate + H(+). Catalyzes the 2-thiolation of uridine at the wobble position (U34) of tRNA, leading to the formation of s(2)U34. This Campylobacter jejuni subsp. jejuni serotype O:2 (strain ATCC 700819 / NCTC 11168) protein is tRNA-specific 2-thiouridylase MnmA.